The following is a 122-amino-acid chain: Large ribosomal subunit protein uL18 (122 aa).

Belongs to the universal ribosomal protein uL18 family. Part of the 50S ribosomal subunit; part of the 5S rRNA/L5/L18/L25 subcomplex. Contacts the 5S and 23S rRNAs.

In terms of biological role, this is one of the proteins that bind and probably mediate the attachment of the 5S RNA into the large ribosomal subunit, where it forms part of the central protuberance. This chain is Large ribosomal subunit protein uL18, found in Dictyoglomus thermophilum (strain ATCC 35947 / DSM 3960 / H-6-12).